The following is a 237-amino-acid chain: Probable transcriptional regulatory protein NIS_0560 (237 aa).

Belongs to the TACO1 family.

It is found in the cytoplasm. The polypeptide is Probable transcriptional regulatory protein NIS_0560 (Nitratiruptor sp. (strain SB155-2)).